The following is a 220-amino-acid chain: 3-dehydroquinate dehydratase (220 aa).

3-dehydroquinate contacts are provided by residues S8, 30–32 (ELR), and R63. H114 (proton donor/acceptor) is an active-site residue. Catalysis depends on K140, which acts as the Schiff-base intermediate with substrate. Residues R174 and Q197 each contribute to the 3-dehydroquinate site.

It belongs to the type-I 3-dehydroquinase family. Homodimer.

It carries out the reaction 3-dehydroquinate = 3-dehydroshikimate + H2O. It participates in metabolic intermediate biosynthesis; chorismate biosynthesis; chorismate from D-erythrose 4-phosphate and phosphoenolpyruvate: step 3/7. In terms of biological role, involved in the third step of the chorismate pathway, which leads to the biosynthesis of aromatic amino acids. Catalyzes the cis-dehydration of 3-dehydroquinate (DHQ) and introduces the first double bond of the aromatic ring to yield 3-dehydroshikimate. This Saccharolobus solfataricus (strain ATCC 35092 / DSM 1617 / JCM 11322 / P2) (Sulfolobus solfataricus) protein is 3-dehydroquinate dehydratase.